The following is a 380-amino-acid chain: 1-deoxy-D-xylulose 5-phosphate reductoisomerase (380 aa).

NADPH contacts are provided by Thr10, Gly11, Ser12, Ile13, Gly36, Arg37, Asn38, and Asn120. Lys121 is a binding site for 1-deoxy-D-xylulose 5-phosphate. Glu122 is a binding site for NADPH. Asp146 is a binding site for Mn(2+). Ser147, Glu148, Ser172, and His195 together coordinate 1-deoxy-D-xylulose 5-phosphate. Mn(2+) is bound at residue Glu148. Gly201 contacts NADPH. 1-deoxy-D-xylulose 5-phosphate-binding residues include Ser208, Asn213, Lys214, and Glu217. A Mn(2+)-binding site is contributed by Glu217.

The protein belongs to the DXR family. Mg(2+) is required as a cofactor. Mn(2+) serves as cofactor.

The enzyme catalyses 2-C-methyl-D-erythritol 4-phosphate + NADP(+) = 1-deoxy-D-xylulose 5-phosphate + NADPH + H(+). It functions in the pathway isoprenoid biosynthesis; isopentenyl diphosphate biosynthesis via DXP pathway; isopentenyl diphosphate from 1-deoxy-D-xylulose 5-phosphate: step 1/6. Catalyzes the NADPH-dependent rearrangement and reduction of 1-deoxy-D-xylulose-5-phosphate (DXP) to 2-C-methyl-D-erythritol 4-phosphate (MEP). This Listeria monocytogenes serotype 4a (strain HCC23) protein is 1-deoxy-D-xylulose 5-phosphate reductoisomerase.